The primary structure comprises 190 residues: Elongation factor P-like protein (190 aa).

The protein belongs to the elongation factor P family.

The sequence is that of Elongation factor P-like protein from Edwardsiella ictaluri (strain 93-146).